The primary structure comprises 862 residues: DNA mismatch repair protein MutS (862 aa).

Position 613 to 620 (613 to 620 (GPNMAGKS)) interacts with ATP.

This sequence belongs to the DNA mismatch repair MutS family.

Its function is as follows. This protein is involved in the repair of mismatches in DNA. It is possible that it carries out the mismatch recognition step. This protein has a weak ATPase activity. This is DNA mismatch repair protein MutS from Desulfitobacterium hafniense (strain Y51).